Reading from the N-terminus, the 102-residue chain is Large ribosomal subunit protein bL21 (102 aa).

It belongs to the bacterial ribosomal protein bL21 family. Part of the 50S ribosomal subunit. Contacts protein L20.

Its function is as follows. This protein binds to 23S rRNA in the presence of protein L20. The sequence is that of Large ribosomal subunit protein bL21 from Cytophaga hutchinsonii (strain ATCC 33406 / DSM 1761 / CIP 103989 / NBRC 15051 / NCIMB 9469 / D465).